The chain runs to 139 residues: Prefoldin subunit alpha (139 aa).

This sequence belongs to the prefoldin subunit alpha family. Heterohexamer of two alpha and four beta subunits.

The protein resides in the cytoplasm. In terms of biological role, molecular chaperone capable of stabilizing a range of proteins. Seems to fulfill an ATP-independent, HSP70-like function in archaeal de novo protein folding. The chain is Prefoldin subunit alpha from Picrophilus torridus (strain ATCC 700027 / DSM 9790 / JCM 10055 / NBRC 100828 / KAW 2/3).